We begin with the raw amino-acid sequence, 299 residues long: MASSSDHTAKIIDGKAIAHTIRSEIAEEVRGLSEKHGKVPGLAVVIVGSRKDSQTYVNTKRKACAEVGIKSFDVGLPEEVSEADLISKVHELNSNPDVHGILVQLPLPKHINEEHILGAISIDKDVDGFHPLNIGKLAMKGREPLFLPCTPKGCLELLARSGVKIKGQRAVVVGRSNIVGLPVSLLLLKADATVTTVHSHTKDPEAIIREADIVIAACGQAHMIKGNWIKPGAAVIDVGTNAVSDPSKKSGYRLVGDVDFAEASKVAGFITPVPGGVGPMTVAMLLRNTVDGAKRVFGE.

The protein belongs to the tetrahydrofolate dehydrogenase/cyclohydrolase family. In terms of assembly, homodimer.

It carries out the reaction (6R)-5,10-methylene-5,6,7,8-tetrahydrofolate + NADP(+) = (6R)-5,10-methenyltetrahydrofolate + NADPH. The enzyme catalyses (6R)-5,10-methenyltetrahydrofolate + H2O = (6R)-10-formyltetrahydrofolate + H(+). It participates in one-carbon metabolism; tetrahydrofolate interconversion. Its function is as follows. Catalyzes the oxidation of 5,10-methylenetetrahydrofolate to 5,10-methenyltetrahydrofolate and then the hydrolysis of 5,10-methenyltetrahydrofolate to 10-formyltetrahydrofolate. The protein is Bifunctional protein FolD 2 (FOLD2) of Arabidopsis thaliana (Mouse-ear cress).